We begin with the raw amino-acid sequence, 313 residues long: Aspartate carbamoyltransferase catalytic subunit (313 aa).

Carbamoyl phosphate is bound by residues Arg-51 and Thr-52. Lys-80 lines the L-aspartate pocket. The carbamoyl phosphate site is built by Arg-101, His-129, and Gln-132. Residues Arg-162 and Arg-224 each coordinate L-aspartate. Residues Leu-263 and Pro-264 each contribute to the carbamoyl phosphate site.

It belongs to the aspartate/ornithine carbamoyltransferase superfamily. ATCase family. As to quaternary structure, heterododecamer (2C3:3R2) of six catalytic PyrB chains organized as two trimers (C3), and six regulatory PyrI chains organized as three dimers (R2).

The catalysed reaction is carbamoyl phosphate + L-aspartate = N-carbamoyl-L-aspartate + phosphate + H(+). It participates in pyrimidine metabolism; UMP biosynthesis via de novo pathway; (S)-dihydroorotate from bicarbonate: step 2/3. Catalyzes the condensation of carbamoyl phosphate and aspartate to form carbamoyl aspartate and inorganic phosphate, the committed step in the de novo pyrimidine nucleotide biosynthesis pathway. The protein is Aspartate carbamoyltransferase catalytic subunit of Phocaeicola vulgatus (strain ATCC 8482 / DSM 1447 / JCM 5826 / CCUG 4940 / NBRC 14291 / NCTC 11154) (Bacteroides vulgatus).